A 267-amino-acid chain; its full sequence is 5'-nucleotidase SurE (267 aa).

A divalent metal cation-binding residues include Asp-9, Asp-10, Ser-40, and Asn-97.

The protein belongs to the SurE nucleotidase family. A divalent metal cation is required as a cofactor.

The protein localises to the cytoplasm. It carries out the reaction a ribonucleoside 5'-phosphate + H2O = a ribonucleoside + phosphate. Its function is as follows. Nucleotidase that shows phosphatase activity on nucleoside 5'-monophosphates. The protein is 5'-nucleotidase SurE of Helicobacter pylori (strain ATCC 700392 / 26695) (Campylobacter pylori).